A 460-amino-acid polypeptide reads, in one-letter code: C4-dicarboxylate transport protein (460 aa).

9 helical membrane passes run 20 to 40 (SLYFQVIVAIVIGILIGHFYP), 56 to 76 (LIKMVIAPIIFCTVVSGIAGM), 88 to 108 (YALLYFEIVSTIALLIGLIVV), 153 to 173 (IVGAFANGDILQVLMFSVIFG), 200 to 220 (IINMIMKLAPIGAFGAMAFTI), 234 to 254 (LMICFYITCALFVVLVLGAIC), 301 to 321 (VVGLVIPTGYSFNLDGTSIYL), 342 to 362 (ITLLLVLLLSSKGAAGVTGSG), and 364 to 384 (IVLAATLSAVGHLPVAGLALI). A disordered region spans residues 438 to 460 (PEDDLGVAEGPTPANAVNTTKTV).

The protein belongs to the dicarboxylate/amino acid:cation symporter (DAACS) (TC 2.A.23) family.

The protein localises to the cell inner membrane. Responsible for the transport of dicarboxylates such as succinate, fumarate, and malate from the periplasm across the membrane. In Pseudomonas savastanoi pv. phaseolicola (strain 1448A / Race 6) (Pseudomonas syringae pv. phaseolicola (strain 1448A / Race 6)), this protein is C4-dicarboxylate transport protein.